We begin with the raw amino-acid sequence, 476 residues long: Probable coniferyl aldehyde dehydrogenase (476 aa).

Catalysis depends on residues Glu225 and Cys259.

Belongs to the aldehyde dehydrogenase family. Homodimer.

It catalyses the reaction (E)-coniferaldehyde + NADP(+) + H2O = (E)-ferulate + NADPH + 2 H(+). It carries out the reaction (E)-coniferaldehyde + NAD(+) + H2O = (E)-ferulate + NADH + 2 H(+). In Pseudomonas aeruginosa (strain ATCC 15692 / DSM 22644 / CIP 104116 / JCM 14847 / LMG 12228 / 1C / PRS 101 / PAO1), this protein is Probable coniferyl aldehyde dehydrogenase (calB).